A 419-amino-acid polypeptide reads, in one-letter code: D-galactonate dehydratase family member SEN1436 (419 aa).

Residues Gln-45 and His-129 each contribute to the substrate site. The Proton donor/acceptor role is filled by Tyr-160. Asp-225 is a Mg(2+) binding site. His-227 (proton donor/acceptor) is an active-site residue. The Mg(2+) site is built by Glu-251 and Glu-277. Substrate is bound by residues Glu-277, Arg-298, His-327, Asp-331, and Glu-354.

This sequence belongs to the mandelate racemase/muconate lactonizing enzyme family. GalD subfamily. In terms of assembly, homotetramer. Mg(2+) is required as a cofactor.

The enzyme catalyses D-gluconate = 2-dehydro-3-deoxy-D-gluconate + H2O. Has low D-gluconate dehydratase activity (in vitro), suggesting that it has no significant role in D-gluconate degradation in vivo. Has no detectable activity with a panel of 70 other acid sugars (in vitro). This is D-galactonate dehydratase family member SEN1436 from Salmonella enteritidis PT4 (strain P125109).